Reading from the N-terminus, the 685-residue chain is Probable transketolase (685 aa).

Histidine 32 contributes to the substrate binding site. Residues histidine 72 and 121–123 (GPL) contribute to the thiamine diphosphate site. Aspartate 162 lines the Mg(2+) pocket. Residues glycine 163 and asparagine 192 each coordinate thiamine diphosphate. Mg(2+)-binding residues include asparagine 192 and isoleucine 194. 3 residues coordinate substrate: histidine 268, arginine 363, and serine 390. Histidine 268 lines the thiamine diphosphate pocket. Thiamine diphosphate is bound by residues glutamate 422 and phenylalanine 448. Residue glutamate 422 is the Proton donor of the active site. The substrate site is built by histidine 472, aspartate 480, and arginine 531.

Belongs to the transketolase family. As to quaternary structure, homodimer. The cofactor is Mg(2+). Ca(2+) is required as a cofactor. Requires Mn(2+) as cofactor. Co(2+) serves as cofactor. It depends on thiamine diphosphate as a cofactor.

It catalyses the reaction D-sedoheptulose 7-phosphate + D-glyceraldehyde 3-phosphate = aldehydo-D-ribose 5-phosphate + D-xylulose 5-phosphate. Catalyzes the transfer of a two-carbon ketol group from a ketose donor to an aldose acceptor, via a covalent intermediate with the cofactor thiamine pyrophosphate. The polypeptide is Probable transketolase (Schizosaccharomyces pombe (strain 972 / ATCC 24843) (Fission yeast)).